We begin with the raw amino-acid sequence, 865 residues long: cGMP-specific 3',5'-cyclic phosphodiesterase (865 aa).

A Phosphoserine modification is found at Ser-92. GAF domains lie at 154–304 (DVTA…GIVL) and 336–493 (SLEV…GLGI). Positions 526 to 850 (ETRELQSLAA…QKWQALAEQQ (325 aa)) constitute a PDEase domain. The active-site Proton donor is the His-603. His-607, His-643, Asp-644, and Asp-754 together coordinate Zn(2+). A Mg(2+)-binding site is contributed by Asp-644. Gln-807 is a 3',5'-cyclic GMP binding site.

The protein belongs to the cyclic nucleotide phosphodiesterase family. Zn(2+) is required as a cofactor. Requires Mg(2+) as cofactor. Phosphorylation is regulated by binding of cGMP to the two allosteric sites. Phosphorylation by PRKG1 leads to its activation.

The catalysed reaction is 3',5'-cyclic GMP + H2O = GMP + H(+). It functions in the pathway purine metabolism; 3',5'-cyclic GMP degradation; GMP from 3',5'-cyclic GMP: step 1/1. Its activity is regulated as follows. Most potently inhibited by zaprinast and dipyridamole. Its function is as follows. Plays a role in signal transduction by regulating the intracellular concentration of cyclic nucleotides. This phosphodiesterase catalyzes the specific hydrolysis of cGMP to 5'-GMP. Specifically regulates nitric-oxide-generated cGMP. This Bos taurus (Bovine) protein is cGMP-specific 3',5'-cyclic phosphodiesterase (PDE5A).